The primary structure comprises 1235 residues: ATP-dependent DNA helicase mph1 (1235 aa).

Disordered stretches follow at residues 20-78 (LTQA…YRIH) and 96-148 (DEMP…VHSP). A compositionally biased stretch (basic and acidic residues) spans 61–72 (SRSDNDEADEKK). Residues 137–148 (AKTQKQNIVHSP) are compositionally biased toward polar residues. The 169-residue stretch at 272 to 440 (IVHKGLFNNL…EVIDNLEIAE (169 aa)) folds into the Helicase ATP-binding domain. ATP is bound at residue 285–292 (LPTGLGKT). A DEAH box motif is present at residues 388 to 391 (DEAH). The region spanning 608–784 (KLTYLCDTVL…GSRFTFRHDL (177 aa)) is the Helicase C-terminal domain. Disordered stretches follow at residues 808-827 (NTQD…RKKL), 944-1117 (SRLQ…PPLM), and 1144-1235 (TGAK…DSDE). Residues 947 to 958 (QRPEDRDNKPYG) are compositionally biased toward basic and acidic residues. A compositionally biased stretch (basic residues) spans 1015–1027 (VAPKKAKPRRGRA). Basic and acidic residues predominate over residues 1065–1074 (PGERVDRTSD). The segment covering 1075–1085 (MEELEADDDSD) has biased composition (acidic residues). Composition is skewed to polar residues over residues 1095-1114 (PTQT…SSSP) and 1146-1159 (AKNS…MTQE). The segment covering 1160-1170 (SSDGGDSMDSD) has biased composition (low complexity). The segment covering 1194–1209 (PSSSVFSSGQKATPNM) has biased composition (polar residues).

This sequence belongs to the DEAD box helicase family. DEAH subfamily. FANCM sub-subfamily. Interacts with the MHF histone-fold complex to form the FANCM-MHF complex.

The protein resides in the nucleus. The enzyme catalyses ATP + H2O = ADP + phosphate + H(+). ATP-dependent DNA helicase involved in DNA damage repair by homologous recombination and in genome maintenance. Capable of unwinding D-loops. Plays a role in limiting crossover recombinants during mitotic DNA double-strand break (DSB) repair. Component of a FANCM-MHF complex which promotes gene conversion at blocked replication forks, probably by reversal of the stalled fork. This is ATP-dependent DNA helicase mph1 from Sclerotinia sclerotiorum (strain ATCC 18683 / 1980 / Ss-1) (White mold).